A 70-amino-acid chain; its full sequence is uncharacterized protein (70 aa).

This is an uncharacterized protein from Methanocaldococcus jannaschii (strain ATCC 43067 / DSM 2661 / JAL-1 / JCM 10045 / NBRC 100440) (Methanococcus jannaschii).